The primary structure comprises 380 residues: Queuine tRNA-ribosyltransferase (380 aa).

Asp96 acts as the Proton acceptor in catalysis. Substrate contacts are provided by residues 96–100, Asp150, Gln193, and Gly220; that span reads DSGGF. An RNA binding region spans residues 251–257; that stretch reads GVGAPDS. Asp270 acts as the Nucleophile in catalysis. An RNA binding; important for wobble base 34 recognition region spans residues 275–279; sequence TRIAR. Positions 308, 310, 313, and 339 each coordinate Zn(2+).

The protein belongs to the queuine tRNA-ribosyltransferase family. In terms of assembly, homodimer. Within each dimer, one monomer is responsible for RNA recognition and catalysis, while the other monomer binds to the replacement base PreQ1. Zn(2+) is required as a cofactor.

The catalysed reaction is 7-aminomethyl-7-carbaguanine + guanosine(34) in tRNA = 7-aminomethyl-7-carbaguanosine(34) in tRNA + guanine. Its pathway is tRNA modification; tRNA-queuosine biosynthesis. In terms of biological role, catalyzes the base-exchange of a guanine (G) residue with the queuine precursor 7-aminomethyl-7-deazaguanine (PreQ1) at position 34 (anticodon wobble position) in tRNAs with GU(N) anticodons (tRNA-Asp, -Asn, -His and -Tyr). Catalysis occurs through a double-displacement mechanism. The nucleophile active site attacks the C1' of nucleotide 34 to detach the guanine base from the RNA, forming a covalent enzyme-RNA intermediate. The proton acceptor active site deprotonates the incoming PreQ1, allowing a nucleophilic attack on the C1' of the ribose to form the product. After dissociation, two additional enzymatic reactions on the tRNA convert PreQ1 to queuine (Q), resulting in the hypermodified nucleoside queuosine (7-(((4,5-cis-dihydroxy-2-cyclopenten-1-yl)amino)methyl)-7-deazaguanosine). This Streptococcus agalactiae serotype Ia (strain ATCC 27591 / A909 / CDC SS700) protein is Queuine tRNA-ribosyltransferase.